The chain runs to 429 residues: UDP-glucuronate 4-epimerase 1 (429 aa).

2 helical membrane passes run 36–56 and 87–107; these read FLWA…QSFV and GISV…SLAL. 89–120 provides a ligand contact to NAD(+); sequence SVLVTGATGFVGSHVSLALRKRGDGVVGLDNF. The active-site Proton acceptor is Tyr239.

It belongs to the NAD(P)-dependent epimerase/dehydratase family. As to quaternary structure, homodimer. In root stele, leaves, siliques, flowers, pollen and stems.

It localises to the golgi apparatus. The protein resides in the golgi stack membrane. The catalysed reaction is UDP-alpha-D-glucuronate = UDP-alpha-D-galacturonate. With respect to regulation, inhibited by UDP-Xylose. UDP-D-glucuronate 4-epimerase involved in the synthesis of the negatively charged monosaccharide that forms the backbone of pectic cell wall components. The protein is UDP-glucuronate 4-epimerase 1 (GAE1) of Arabidopsis thaliana (Mouse-ear cress).